An 83-amino-acid polypeptide reads, in one-letter code: Retinal cone rhodopsin-sensitive cGMP 3',5'-cyclic phosphodiesterase subunit gamma (83 aa).

A compositionally biased stretch (low complexity) spans Met-1 to Pro-19. Residues Met-1–Pro-51 are disordered. Over residues Gly-22–Val-43 the composition is skewed to basic residues.

The protein belongs to the rod/cone cGMP-PDE gamma subunit family. Tetramer composed of two catalytic chains (alpha and beta), and two inhibitory chains (gamma).

It carries out the reaction 3',5'-cyclic GMP + H2O = GMP + H(+). Its function is as follows. Participates in processes of transmission and amplification of the visual signal. cGMP-PDEs are the effector molecules in G-protein-mediated phototransduction in vertebrate rods and cones. This Ictidomys tridecemlineatus (Thirteen-lined ground squirrel) protein is Retinal cone rhodopsin-sensitive cGMP 3',5'-cyclic phosphodiesterase subunit gamma (PDE6H).